A 564-amino-acid polypeptide reads, in one-letter code: Apyrase (564 aa).

Residues 1-25 (MAGKPGIQLFVIFLLLSSFAAVVWA) form the signal peptide. Residues Asp-48, His-50, Asp-99, Asn-131, His-234, and His-258 each contribute to the a divalent metal cation site. Arg-371 is an AMP binding site. N-linked (GlcNAc...) asparagine glycosylation is present at Asn-391. Positions 406, 425, and 515 each coordinate AMP.

It belongs to the 5'-nucleotidase family. The cofactor is a divalent metal cation. As to expression, female salivary gland (at protein level). Low-level expression in male tissues. Not detected in female carcasses without salivary glands.

It localises to the secreted. It carries out the reaction a ribonucleoside 5'-triphosphate + 2 H2O = a ribonucleoside 5'-phosphate + 2 phosphate + 2 H(+). In terms of biological role, facilitates hematophagy by inhibiting ADP-dependent platelet aggregation in the host. Cleaves adenosine triphosphate (ATP) and adenosine diphosphate (ADP) to adenosine monophosphate (AMP) and inorganic phosphate. May reduce probing time by facilitating the speed of locating blood. The protein is Apyrase of Aedes albopictus (Asian tiger mosquito).